Consider the following 421-residue polypeptide: NADH-quinone oxidoreductase subunit F 2 (421 aa).

53–62 is a binding site for NAD(+); sequence GRGGAGFPTG. An FMN-binding site is contributed by 165 to 212; it reads GAGAYICGEETAMLESLEGKRAQPRLKPPFPAVAGLYASPTVINNVET. 4 residues coordinate [4Fe-4S] cluster: C342, C345, C348, and C388.

Belongs to the complex I 51 kDa subunit family. FMN serves as cofactor. The cofactor is [4Fe-4S] cluster.

It carries out the reaction a quinone + NADH + 5 H(+)(in) = a quinol + NAD(+) + 4 H(+)(out). Its function is as follows. NDH-1 shuttles electrons from NADH, via FMN and iron-sulfur (Fe-S) centers, to quinones in the respiratory chain. The immediate electron acceptor for the enzyme in this species is believed to be ubiquinone. Couples the redox reaction to proton translocation (for every two electrons transferred, four hydrogen ions are translocated across the cytoplasmic membrane), and thus conserves the redox energy in a proton gradient. This Rhizobium meliloti (strain 1021) (Ensifer meliloti) protein is NADH-quinone oxidoreductase subunit F 2 (nuoF2).